We begin with the raw amino-acid sequence, 297 residues long: 4-hydroxy-tetrahydrodipicolinate synthase (297 aa).

Residue Thr49 coordinates pyruvate. Tyr137 serves as the catalytic Proton donor/acceptor. The Schiff-base intermediate with substrate role is filled by Lys166. Ile208 serves as a coordination point for pyruvate.

It belongs to the DapA family. Homotetramer; dimer of dimers.

It is found in the cytoplasm. It catalyses the reaction L-aspartate 4-semialdehyde + pyruvate = (2S,4S)-4-hydroxy-2,3,4,5-tetrahydrodipicolinate + H2O + H(+). Its pathway is amino-acid biosynthesis; L-lysine biosynthesis via DAP pathway; (S)-tetrahydrodipicolinate from L-aspartate: step 3/4. Catalyzes the condensation of (S)-aspartate-beta-semialdehyde [(S)-ASA] and pyruvate to 4-hydroxy-tetrahydrodipicolinate (HTPA). In Porphyromonas gingivalis (strain ATCC 33277 / DSM 20709 / CIP 103683 / JCM 12257 / NCTC 11834 / 2561), this protein is 4-hydroxy-tetrahydrodipicolinate synthase.